The primary structure comprises 357 residues: Arginine kinase Met e 2 (357 aa).

The 83-residue stretch at 9-91 folds into the Phosphagen kinase N-terminal domain; sequence KLEAGFKKLE…FDPIIEDYHV (83 aa). 64–68 contacts L-arginine; it reads GVGIY. The Phosphagen kinase C-terminal domain maps to 119–356; that stretch reads FVISTRVRCG…LELIKIEKEM (238 aa). ATP is bound by residues 122-126 and H185; that span reads STRVR. E225 provides a ligand contact to L-arginine. R229 contacts ATP. C271 serves as a coordination point for L-arginine. ATP-binding positions include 280–284 and 309–314; these read RASVH and RGTRGE. E314 provides a ligand contact to L-arginine.

This sequence belongs to the ATP:guanido phosphotransferase family.

The enzyme catalyses L-arginine + ATP = N(omega)-phospho-L-arginine + ADP + H(+). Its function is as follows. Catalyzes the reversible transfer of high energy ATP gamma-phosphate group to L-arginine. The polypeptide is Arginine kinase Met e 2 (Metapenaeus ensis (Greasyback shrimp)).